Consider the following 271-residue polypeptide: Methylcorrinoid:tetrahydrofolate methyltransferase (271 aa).

The region spanning 1–247 (MIIIGEKLNG…GAIFATDALL (247 aa)) is the Pterin-binding domain.

Belongs to the vitamin-B12 dependent methionine synthase family. As to quaternary structure, the proline betaine:THF methyl transfer system is composed of two methyltransferases, MtpB and MtqA, and the corrinoid protein MtqC. The L-carnitine:THF methyl transfer system is composed of two methyltransferases, MtcB and MtqA, and the corrinoid protein MtqC.

It carries out the reaction methyl-Co(III)-[quaternary-amine-specific corrinoid protein] + (6S)-5,6,7,8-tetrahydrofolate = Co(I)-[quaternary-amine-specific corrinoid protein] + (6S)-5-methyl-5,6,7,8-tetrahydrofolate + H(+). Functionally, involved in the degradation of the quaternary amines L-proline betaine and L-carnitine. Component of a corrinoid-dependent methyltransferase system that transfers a methyl group from L-proline betaine or L-carnitine to tetrahydrofolate (THF), forming methyl-THF, a key intermediate in the Wood-Ljungdahl acetogenesis pathway. MtqA catalyzes the transfer of a methyl group from the methylated corrinoid protein MtqC to THF, forming methyl-THF. This is Methylcorrinoid:tetrahydrofolate methyltransferase from Eubacterium limosum.